Consider the following 1445-residue polypeptide: CD109 antigen (1445 aa).

Residues Met1–Ala21 form the signal peptide. N-linked (GlcNAc...) asparagine glycans are attached at residues Asn68, Asn118, Asn247, Asn279, Asn365, Asn419, Asn513, and Asn645. The interval Asp593–Gly702 is bait region (approximate). The isoglutamyl cysteine thioester (Cys-Gln) cross-link spans Cys921–Gln924. N-linked (GlcNAc...) asparagine glycans are attached at residues Asn1086 and Asn1355. The GPI-anchor amidated alanine moiety is linked to residue Ala1420. Positions Ser1421 to Leu1445 are cleaved as a propeptide — removed in mature form.

This sequence belongs to the protease inhibitor I39 (alpha-2-macroglobulin) family. As to quaternary structure, heterodimer; disulfide-linked. Interacts with TGFB1 and TGFBR1. Forms a heteromeric complex with TGFBR1, TGFBR2 and TGFBR3 in a ligand-independent manner. In terms of processing, N-glycosylated. Post-translationally, 2 forms of 150 (p150) and 120 kDa (p120) exist due to proteolytic degradation from a 180 kDa form. Widely expressed with high level in uterus, aorta, heart, lung, trachea, placenta and in fetal heart, kidney, liver, spleen and lung. Expressed by CD34(+) acute myeloid leukemia cell lines, T-cell lines, activated T-lymphoblasts, endothelial cells and activated platelets. Isoform 4 is expressed in placenta. Isoform 1 is expressed in keratinocytes and placenta.

The protein resides in the cell membrane. In terms of biological role, modulates negatively TGFB1 signaling in keratinocytes. The polypeptide is CD109 antigen (CD109) (Homo sapiens (Human)).